A 204-amino-acid polypeptide reads, in one-letter code: uncharacterized protein (204 aa).

This is an uncharacterized protein from Rickettsia prowazekii (strain Madrid E).